A 310-amino-acid chain; its full sequence is MRNRLLSLVTLFLSLSVATAVSASPPPKAGLPLQQELASGSALVTDQNTGKVLYSRNPDLVVPIASITKLMTAMVVLDSKLPLDEVLPIAISETSEMRGVFSRVRVGSQISRRDMLLLALMSSENRAAASLAQNYPGGKNAFVKAMNAKAHALGMKNTRYVEPTGLSLHNVSTARDLTRLLVASRQYPLLSQWSTTPEKTVAFRHPNYTLGFRNTNHLINNKTWNIQLTKTGFTNEAGHCLVMRTTINRSPVNLVVLDAFGKYTHFADATRLRRWLETGQVTAIPAAAKAYRLQRDRERGLGQPVAQAVR.

The first 23 residues, 1-23 (MRNRLLSLVTLFLSLSVATAVSA), serve as a signal peptide directing secretion. Catalysis depends on serine 66, which acts as the Acyl-ester intermediate. The Proton acceptor role is filled by lysine 69. Residue serine 123 is part of the active site. Lysine 230 contacts substrate.

It belongs to the peptidase S11 family.

It is found in the periplasm. Its function is as follows. Cell wall formation. The chain is D-alanyl-D-alanine endopeptidase (pbpG) from Pseudomonas aeruginosa (strain ATCC 15692 / DSM 22644 / CIP 104116 / JCM 14847 / LMG 12228 / 1C / PRS 101 / PAO1).